The following is a 146-amino-acid chain: Putative pre-16S rRNA nuclease (146 aa).

Belongs to the YqgF nuclease family.

The protein localises to the cytoplasm. In terms of biological role, could be a nuclease involved in processing of the 5'-end of pre-16S rRNA. The polypeptide is Putative pre-16S rRNA nuclease (Burkholderia pseudomallei (strain 668)).